A 176-amino-acid chain; its full sequence is dCTP deaminase (176 aa).

DCTP is bound by residues 99-104 and D115; that span reads RSTLAR. The Proton donor/acceptor role is filled by E125. Q163 provides a ligand contact to dCTP.

This sequence belongs to the dCTP deaminase family. In terms of assembly, homotrimer.

The enzyme catalyses dCTP + H2O + H(+) = dUTP + NH4(+). It participates in pyrimidine metabolism; dUMP biosynthesis; dUMP from dCTP (dUTP route): step 1/2. Catalyzes the deamination of dCTP to dUTP. This is dCTP deaminase from Pyrobaculum calidifontis (strain DSM 21063 / JCM 11548 / VA1).